An 894-amino-acid chain; its full sequence is Microsomal triglyceride transfer protein large subunit (894 aa).

Residues Met1–Ser18 form the signal peptide. The Vitellogenin domain occupies Leu28–Ile662. Cysteines 174 and 194 form a disulfide.

In terms of assembly, heterodimer; heterodimerizes with the protein disulfide isomerase (P4HB/PDI). Interacts with APOB. Interacts with PRAP1.

It localises to the endoplasmic reticulum. It is found in the golgi apparatus. The catalysed reaction is a 1,2-diacyl-sn-glycero-3-phosphocholine(in) = a 1,2-diacyl-sn-glycero-3-phosphocholine(out). It carries out the reaction a 1,2-diacyl-sn-glycero-3-phosphoethanolamine(in) = a 1,2-diacyl-sn-glycero-3-phosphoethanolamine(out). The enzyme catalyses a cholesterol ester(in) = a cholesterol ester(out). It catalyses the reaction a triacyl-sn-glycerol(in) = a triacyl-sn-glycerol(out). Functionally, catalyzes the transport of triglyceride, cholesteryl ester, and phospholipid between phospholipid surfaces. Required for the assembly and secretion of plasma lipoproteins that contain apolipoprotein B. May be involved in regulating cholesteryl ester biosynthesis in cells that produce lipoproteins. The chain is Microsomal triglyceride transfer protein large subunit (MTTP) from Sus scrofa (Pig).